The chain runs to 377 residues: MSRGIIIIGSGFAARQLVKNIRKQDAHVPLTLIAADSMDEYNKPDLSHVISQSQRADDLTRQLAGEFAEQFNLRLFPHIRVADIDADAHVVKSQDKQWQYDKLVLATGATAFVPPIAGRELMLTLNSQQEYRACETQLRDAQRVLIVGGGLIGSELAMDFCRAGKTVTLMDNAASLLASLMPPEVSSRLQHHLTDMGVHLLLKSQLQKLEKIEAGIRATLASQRSIEVDAVIAATGLRPETALARRAGVAVNRGVCVDSYLQTSHPDIYAIGDCAEINGQVLPFLQPIQLSAMYLAKNLFGGNAPLKLPAMLVKVKTPELPLHLAGETQRRDLSWQITAESDGMIAKGMSGEGQLRAFVVSEDRMKEAFALLKTLSV.

It belongs to the FAD-dependent oxidoreductase family. FAD is required as a cofactor.

The protein resides in the cytoplasm. It carries out the reaction 2 reduced [nitric oxide reductase rubredoxin domain] + NAD(+) + H(+) = 2 oxidized [nitric oxide reductase rubredoxin domain] + NADH. It functions in the pathway nitrogen metabolism; nitric oxide reduction. In terms of biological role, one of at least two accessory proteins for anaerobic nitric oxide (NO) reductase. Reduces the rubredoxin moiety of NO reductase. This is Nitric oxide reductase FlRd-NAD(+) reductase from Salmonella agona (strain SL483).